Reading from the N-terminus, the 296-residue chain is Phosphoribosylaminoimidazole-succinocarboxamide synthase (296 aa).

The protein belongs to the SAICAR synthetase family.

It carries out the reaction 5-amino-1-(5-phospho-D-ribosyl)imidazole-4-carboxylate + L-aspartate + ATP = (2S)-2-[5-amino-1-(5-phospho-beta-D-ribosyl)imidazole-4-carboxamido]succinate + ADP + phosphate + 2 H(+). It participates in purine metabolism; IMP biosynthesis via de novo pathway; 5-amino-1-(5-phospho-D-ribosyl)imidazole-4-carboxamide from 5-amino-1-(5-phospho-D-ribosyl)imidazole-4-carboxylate: step 1/2. The protein is Phosphoribosylaminoimidazole-succinocarboxamide synthase of Pelobacter propionicus (strain DSM 2379 / NBRC 103807 / OttBd1).